The chain runs to 795 residues: Toll-like receptor 6 (795 aa).

The first 27 residues, 1–27 (MSQDRKPIVGSFHFVCALALIVGSMTP), serve as a signal peptide directing secretion. The Extracellular portion of the chain corresponds to 28–584 (FSNELESMVD…FHMSPLSCDT (557 aa)). N-linked (GlcNAc...) asparagine glycosylation occurs at asparagine 42. 19 LRR repeats span residues 54–77 (TKAL…FLSE), 78–101 (LRVL…FNQD), 102–125 (LEYL…SLRH), 126–150 (LDLS…KLTF), 151–175 (LGLS…SCIL), 176–199 (LDLV…TTVL), 200–223 (HLVF…LGHL), 224–250 (QLSN…RGPT), 251–278 (LLNV…PRPV), 279–308 (EYLN…KSLM), 309–337 (IEHV…KMLS), 338–361 (ISDT…LNFT), 362–388 (QNVF…QRNG), 389–414 (LKNF…SLNS), 415–437 (LNSH…NLSS), 438–457 (NMLT…VLDL), 458–478 (HNNR…LQEL), 479–500 (NVAS…LSVL), and 501–524 (VIDH…IRSL). Residue asparagine 114 is glycosylated (N-linked (GlcNAc...) asparagine). Cysteine 117 and cysteine 139 are oxidised to a cystine. N-linked (GlcNAc...) asparagine glycosylation occurs at asparagine 144. N-linked (GlcNAc...) asparagine glycans are attached at residues asparagine 195 and asparagine 214. A disulfide bond links cysteine 235 and cysteine 265. Residues asparagine 253 and asparagine 285 are each glycosylated (N-linked (GlcNAc...) asparagine). A disulfide bond links cysteine 348 and cysteine 373. N-linked (GlcNAc...) asparagine glycosylation is present at asparagine 359. N-linked (GlcNAc...) asparagine glycosylation is found at asparagine 401 and asparagine 434. Cysteine 424 and cysteine 447 are oxidised to a cystine. An LRRCT domain is found at 525–576 (TAGNNPFQCTCELRDFVKNIGWVAREVVEGWPDSYRCDYPESSKGTALRDFH). A helical transmembrane segment spans residues 585 to 605 (VLLTVTIGATMLVLAVTGAFL). Residues 606–795 (CLYFDLPWYV…ALVNEDDVKT (190 aa)) lie on the Cytoplasmic side of the membrane. Residues 640–781 (LQFHAFVSYS…LFWANLRASF (142 aa)) form the TIR domain.

Belongs to the Toll-like receptor family. As to quaternary structure, homodimer (via cytoplasmic TIR domain). Heterodimer with TLR2 via their respective extracellular domains. Binds MYD88 via their respective TIR domains. Interacts with CD36, following CD36 stimulation by oxLDL or amyloid-beta 42, and forms a heterodimer with TLR4. The trimeric complex is internalized and triggers inflammatory response. LYN kinase activity facilitates TLR4:TLR6 heterodimerization and signal initiation. The heterodimer TLR2:TLR6 interacts with CD14 and CD36 in response to triacylated lipopeptides. Detected in thymus, spleen, ovary and lung. Expressed in macrohpages.

The protein localises to the cell membrane. The protein resides in the cytoplasmic vesicle. It localises to the phagosome membrane. It is found in the membrane raft. Its subcellular location is the golgi apparatus. Its function is as follows. Participates in the innate immune response to Gram-positive bacteria and fungi. Specifically recognizes diacylated and, to a lesser extent, triacylated lipopeptides. In response to diacylated lipopeptides, forms the activation cluster TLR2:TLR6:CD14:CD36, this cluster triggers signaling from the cell surface and subsequently is targeted to the Golgi in a lipid-raft dependent pathway. Acts via MYD88 and TRAF6, leading to NF-kappa-B activation, cytokine secretion and the inflammatory response. Recognizes mycoplasmal macrophage-activating lipopeptide-2kD (MALP-2), soluble tuberculosis factor (STF), phenol-soluble modulin (PSM) and B.burgdorferi outer surface protein A lipoprotein (OspA-L) cooperatively with TLR2. In complex with TLR4, promotes sterile inflammation in monocytes/macrophages in response to oxidized low-density lipoprotein (oxLDL) or amyloid-beta 42. In this context, the initial signal is provided by oxLDL- or amyloid-beta 42-binding to CD36. This event induces the formation of a heterodimer of TLR4 and TLR6, which is rapidly internalized and triggers inflammatory response, leading to the NF-kappa-B-dependent production of CXCL1, CXCL2 and CCL9 cytokines, via MYD88 signaling pathway, and CCL5 cytokine, via TICAM1 signaling pathway, as well as IL1B secretion. This Mus musculus (Mouse) protein is Toll-like receptor 6 (Tlr6).